The chain runs to 278 residues: Undecaprenyl-diphosphatase (278 aa).

The next 8 helical transmembrane spans lie at 3–23 (YILI…IPIS), 42–62 (VAYS…IFYF), 88–108 (FLVI…LFVI), 112–132 (ILGL…IVIY), 152–172 (IIIV…RSGM), 190–210 (LSFI…VLFS), 225–245 (GLLI…NALL), and 253–273 (VVLL…LSDI).

This sequence belongs to the UppP family.

It is found in the cell membrane. It catalyses the reaction di-trans,octa-cis-undecaprenyl diphosphate + H2O = di-trans,octa-cis-undecaprenyl phosphate + phosphate + H(+). Functionally, catalyzes the dephosphorylation of undecaprenyl diphosphate (UPP). The polypeptide is Undecaprenyl-diphosphatase (Saccharolobus solfataricus (strain ATCC 35092 / DSM 1617 / JCM 11322 / P2) (Sulfolobus solfataricus)).